A 733-amino-acid chain; its full sequence is Polyribonucleotide nucleotidyltransferase (733 aa).

Mg(2+)-binding residues include aspartate 503 and aspartate 509. In terms of domain architecture, KH spans 570–629 (PRLTTIQIPVDAIGMVIGKGGETIRSITEETGAEINIDDDGTVTIACSSPEATKAAVETI). The 75-residue stretch at 639–713 (GTIYMGKVRD…GKTKFALSIK (75 aa)) folds into the S1 motif domain.

This sequence belongs to the polyribonucleotide nucleotidyltransferase family. Requires Mg(2+) as cofactor.

It is found in the cytoplasm. The catalysed reaction is RNA(n+1) + phosphate = RNA(n) + a ribonucleoside 5'-diphosphate. Involved in mRNA degradation. Catalyzes the phosphorolysis of single-stranded polyribonucleotides processively in the 3'- to 5'-direction. In Chlorobaculum tepidum (strain ATCC 49652 / DSM 12025 / NBRC 103806 / TLS) (Chlorobium tepidum), this protein is Polyribonucleotide nucleotidyltransferase.